A 150-amino-acid chain; its full sequence is Ribonuclease K6 (150 aa).

The N-terminal stretch at 1-23 is a signal peptide; sequence MVLCFPLLLLLLVLWGQVCPLHA. His-38 acts as the Proton acceptor in catalysis. 4 disulfides stabilise this stretch: Cys-46/Cys-104, Cys-60/Cys-114, Cys-78/Cys-129, and Cys-85/Cys-92. Asn-55 carries N-linked (GlcNAc...) asparagine glycosylation. Substrate is bound by residues 61-65 and Lys-86; that span reads KPQNT. Asn-100 carries an N-linked (GlcNAc...) asparagine glycan. Position 105 (Arg-105) interacts with substrate. The active-site Proton donor is the His-145.

This sequence belongs to the pancreatic ribonuclease family. As to quaternary structure, interacts (via N-terminus) with bacterial lipopolysaccharide (LPS).

It is found in the secreted. The protein resides in the lysosome. It localises to the cytoplasmic granule. In terms of biological role, ribonuclease which shows a preference for the pyrimidines uridine and cytosine. Has potent antibacterial activity against a range of Gram-positive and Gram-negative bacteria, including P.aeruginosa, A.baumanii, M.luteus, S.aureus, E.faecalis, E.faecium, S.saprophyticus and E.coli. Causes loss of bacterial membrane integrity, and also promotes agglutination of Gram-negative bacteria. Probably contributes to urinary tract sterility. Bactericidal activity is independent of RNase activity. The sequence is that of Ribonuclease K6 (RNASE6) from Saimiri sciureus (Common squirrel monkey).